The chain runs to 222 residues: Protein-L-isoaspartate O-methyltransferase (222 aa).

Ser-73 is an active-site residue.

Belongs to the methyltransferase superfamily. L-isoaspartyl/D-aspartyl protein methyltransferase family.

The protein localises to the cytoplasm. The enzyme catalyses [protein]-L-isoaspartate + S-adenosyl-L-methionine = [protein]-L-isoaspartate alpha-methyl ester + S-adenosyl-L-homocysteine. Catalyzes the methyl esterification of L-isoaspartyl residues in peptides and proteins that result from spontaneous decomposition of normal L-aspartyl and L-asparaginyl residues. It plays a role in the repair and/or degradation of damaged proteins. The sequence is that of Protein-L-isoaspartate O-methyltransferase from Chromobacterium violaceum (strain ATCC 12472 / DSM 30191 / JCM 1249 / CCUG 213 / NBRC 12614 / NCIMB 9131 / NCTC 9757 / MK).